A 299-amino-acid chain; its full sequence is Oxygen-dependent coproporphyrinogen-III oxidase (299 aa).

Serine 92 is a binding site for substrate. Positions 96 and 106 each coordinate a divalent metal cation. The Proton donor role is filled by histidine 106. Residue 108 to 110 (NVR) coordinates substrate. 2 residues coordinate a divalent metal cation: histidine 145 and histidine 175. The interval 240–275 (YVEFNLVWDRGTLFGLQTGGRTESILMSMPPLVRWE) is important for dimerization. 258–260 (GGR) serves as a coordination point for substrate.

This sequence belongs to the aerobic coproporphyrinogen-III oxidase family. In terms of assembly, homodimer. Requires a divalent metal cation as cofactor.

The protein resides in the cytoplasm. It catalyses the reaction coproporphyrinogen III + O2 + 2 H(+) = protoporphyrinogen IX + 2 CO2 + 2 H2O. The protein operates within porphyrin-containing compound metabolism; protoporphyrin-IX biosynthesis; protoporphyrinogen-IX from coproporphyrinogen-III (O2 route): step 1/1. Its function is as follows. Involved in the heme biosynthesis. Catalyzes the aerobic oxidative decarboxylation of propionate groups of rings A and B of coproporphyrinogen-III to yield the vinyl groups in protoporphyrinogen-IX. In Salmonella typhi, this protein is Oxygen-dependent coproporphyrinogen-III oxidase.